The following is an 84-amino-acid chain: MAHKKAGGSSKNGRDSAGKRLGVKRFGGQQVTAGSILVRQRGTTIHPGANVGCGKDYTLYALVDGVVSFERKGKDKKKVSVYAQ.

Positions 1–25 (MAHKKAGGSSKNGRDSAGKRLGVKR) are disordered.

It belongs to the bacterial ribosomal protein bL27 family.

The chain is Large ribosomal subunit protein bL27 from Syntrophotalea carbinolica (strain DSM 2380 / NBRC 103641 / GraBd1) (Pelobacter carbinolicus).